The following is an 82-amino-acid chain: Splicing factor U2AF 35 kDa subunit (82 aa).

The residue at position 2 (A2) is an N-acetylalanine. Residues 12-40 (EKDKVNCSFYFKIGACRHGDRCSRLHNKP) form a C3H1-type zinc finger. K39 carries the post-translational modification N6-methyllysine. The RRM domain occupies 65-82 (SHCHVSDVEVQEHYDNFF).

It belongs to the splicing factor SR family. As to quaternary structure, identified in the spliceosome C complex. Heterodimer with U2AF2. Interacts (via RS domain) with PHF5A (via N-terminus). Interacts with ZRANB2. Interacts with SDE2. Interacts with SF3B1.

Its subcellular location is the nucleus. The protein resides in the nucleus speckle. Functionally, plays a critical role in both constitutive and enhancer-dependent splicing by mediating protein-protein interactions and protein-RNA interactions required for accurate 3'-splice site selection. Recruits U2 snRNP to the branch point. Directly mediates interactions between U2AF2 and proteins bound to the enhancers and thus may function as a bridge between U2AF2 and the enhancer complex to recruit it to the adjacent intron. In Sus scrofa (Pig), this protein is Splicing factor U2AF 35 kDa subunit (U2AF1).